The sequence spans 185 residues: Elongation factor P (185 aa).

It belongs to the elongation factor P family.

It is found in the cytoplasm. The protein operates within protein biosynthesis; polypeptide chain elongation. In terms of biological role, involved in peptide bond synthesis. Stimulates efficient translation and peptide-bond synthesis on native or reconstituted 70S ribosomes in vitro. Probably functions indirectly by altering the affinity of the ribosome for aminoacyl-tRNA, thus increasing their reactivity as acceptors for peptidyl transferase. The sequence is that of Elongation factor P from Alkaliphilus oremlandii (strain OhILAs) (Clostridium oremlandii (strain OhILAs)).